The primary structure comprises 339 residues: Ribosomal RNA small subunit methyltransferase H (339 aa).

S-adenosyl-L-methionine is bound by residues 56-58 (GGH), Asp76, Phe102, Asp123, and Gln130. Disordered stretches follow at residues 274–309 (RHSRGQYPEDENLPMPPQRPRYFSKPKRIAPSKAEV) and 320–339 (LRVATRTDTPYNTDPSPQHS). Over residues 325-339 (RTDTPYNTDPSPQHS) the composition is skewed to polar residues.

It belongs to the methyltransferase superfamily. RsmH family.

The protein localises to the cytoplasm. It carries out the reaction cytidine(1402) in 16S rRNA + S-adenosyl-L-methionine = N(4)-methylcytidine(1402) in 16S rRNA + S-adenosyl-L-homocysteine + H(+). Functionally, specifically methylates the N4 position of cytidine in position 1402 (C1402) of 16S rRNA. The sequence is that of Ribosomal RNA small subunit methyltransferase H from Psychrobacter sp. (strain PRwf-1).